An 89-amino-acid polypeptide reads, in one-letter code: Small ribosomal subunit protein bS20 (89 aa).

Basic residues-rich tracts occupy residues 1-10 (MANIKSKIKS) and 17-29 (ARKR…SRVK). A disordered region spans residues 1–29 (MANIKSKIKSIKTMEKARKRNSMIKSRVK).

It belongs to the bacterial ribosomal protein bS20 family.

Its function is as follows. Binds directly to 16S ribosomal RNA. The protein is Small ribosomal subunit protein bS20 of Mycoplasmopsis pulmonis (strain UAB CTIP) (Mycoplasma pulmonis).